A 304-amino-acid polypeptide reads, in one-letter code: ADP-ribosyl cyclase/cyclic ADP-ribose hydrolase 1 (304 aa).

Topologically, residues 1–21 (MANYEFSQVSGDRPGCRLSRK) are cytoplasmic. Residues 22–44 (AQIGLGVGLLVLIALVVGIVVIL) form a helical; Signal-anchor for type II membrane protein membrane-spanning segment. Topologically, residues 45 to 304 (LRPRSLLVWT…PEHPSCRLNT (260 aa)) are extracellular. Intrachain disulfides connect Cys-70-Cys-86, Cys-103-Cys-184, and Cys-164-Cys-177. N-linked (GlcNAc...) asparagine glycosylation occurs at Asn-104. The active site involves Cys-123. A glycan (N-linked (GlcNAc...) asparagine) is linked at Asn-124. Cys-205 is an active-site residue. 2 N-linked (GlcNAc...) asparagine glycosylation sites follow: Asn-213 and Asn-223. Cystine bridges form between Cys-258-Cys-279 and Cys-291-Cys-300.

The protein belongs to the ADP-ribosyl cyclase family. In terms of assembly, homodimer.

It localises to the membrane. The enzyme catalyses NAD(+) = cyclic ADP-beta-D-ribose + nicotinamide + H(+). It catalyses the reaction nicotinate + NADP(+) = nicotinate-adenine dinucleotide phosphate + nicotinamide. It carries out the reaction NAD(+) + H2O = ADP-D-ribose + nicotinamide + H(+). Functionally, synthesizes the second messengers cyclic ADP-ribose (cADPR) and nicotinate-adenine dinucleotide phosphate (NAADP), the former a second messenger for glucose-induced insulin secretion, the latter a Ca(2+) mobilizer. Also has cADPR hydrolase activity. The sequence is that of ADP-ribosyl cyclase/cyclic ADP-ribose hydrolase 1 (Cd38) from Mus musculus (Mouse).